A 274-amino-acid polypeptide reads, in one-letter code: Pyrroline-5-carboxylate reductase 3 (274 aa).

This sequence belongs to the pyrroline-5-carboxylate reductase family. In terms of assembly, homodecamer; composed of 5 homodimers.

The protein resides in the cytoplasm. It catalyses the reaction L-proline + NADP(+) = (S)-1-pyrroline-5-carboxylate + NADPH + 2 H(+). The catalysed reaction is L-proline + NAD(+) = (S)-1-pyrroline-5-carboxylate + NADH + 2 H(+). It functions in the pathway amino-acid biosynthesis; L-proline biosynthesis; L-proline from L-glutamate 5-semialdehyde: step 1/1. Its function is as follows. Oxidoreductase that catalyzes the last step in proline biosynthesis, which corresponds to the reduction of pyrroline-5-carboxylate (P5C) to L-proline using NAD(P)H. Proline is synthesized from either glutamate or ornithine; both are converted to P5C, and then to proline via pyrroline-5-carboxylate reductases (PYCRs). PYCR3 is exclusively linked to the biosynthesis of proline from ornithine. In Xenopus laevis (African clawed frog), this protein is Pyrroline-5-carboxylate reductase 3.